The following is a 60-amino-acid chain: Protein translocase subunit SecE (60 aa).

The helical transmembrane segment at 31-51 (IIVVSTVIFFLVFFYALDIGI) threads the bilayer.

This sequence belongs to the SecE/SEC61-gamma family. Component of the Sec protein translocase complex. Heterotrimer consisting of SecY, SecE and SecG subunits. The heterotrimers can form oligomers, although 1 heterotrimer is thought to be able to translocate proteins. Interacts with the ribosome. Interacts with SecDF, and other proteins may be involved. Interacts with SecA.

The protein resides in the cell membrane. In terms of biological role, essential subunit of the Sec protein translocation channel SecYEG. Clamps together the 2 halves of SecY. May contact the channel plug during translocation. This Staphylococcus epidermidis (strain ATCC 35984 / DSM 28319 / BCRC 17069 / CCUG 31568 / BM 3577 / RP62A) protein is Protein translocase subunit SecE.